The sequence spans 323 residues: Fructose-1,6-bisphosphatase class 1 (323 aa).

Mg(2+) is bound by residues E84, D103, L105, and D106. Residues 106–109 (DGSS), N198, and K264 each bind substrate. Position 270 (E270) interacts with Mg(2+).

This sequence belongs to the FBPase class 1 family. In terms of assembly, homotetramer. Mg(2+) serves as cofactor.

Its subcellular location is the cytoplasm. It carries out the reaction beta-D-fructose 1,6-bisphosphate + H2O = beta-D-fructose 6-phosphate + phosphate. It functions in the pathway carbohydrate biosynthesis; gluconeogenesis. The protein is Fructose-1,6-bisphosphatase class 1 of Hydrogenovibrio crunogenus (strain DSM 25203 / XCL-2) (Thiomicrospira crunogena).